We begin with the raw amino-acid sequence, 283 residues long: Zinc import ATP-binding protein ZnuC (283 aa).

Positions 13 to 228 constitute an ABC transporter domain; it reads VEMRNAGVHR…PEYVRLFGAR (216 aa). 45–52 is an ATP binding site; it reads GPNGSGKS. The segment at 264–283 is disordered; sequence HHHDHARDGGQGGGGHGHAG. A compositionally biased stretch (gly residues) spans 272-283; that stretch reads GGQGGGGHGHAG.

The protein belongs to the ABC transporter superfamily. Zinc importer (TC 3.A.1.15.5) family. The complex is composed of two ATP-binding proteins (ZnuC), two transmembrane proteins (ZnuB) and a solute-binding protein (ZnuA).

The protein localises to the cell inner membrane. It carries out the reaction Zn(2+)(out) + ATP(in) + H2O(in) = Zn(2+)(in) + ADP(in) + phosphate(in) + H(+)(in). In terms of biological role, part of the ABC transporter complex ZnuABC involved in zinc import. Responsible for energy coupling to the transport system. This chain is Zinc import ATP-binding protein ZnuC, found in Chelativorans sp. (strain BNC1).